Consider the following 113-residue polypeptide: Large ribosomal subunit protein bL17 (113 aa).

Belongs to the bacterial ribosomal protein bL17 family. Part of the 50S ribosomal subunit. Contacts protein L32.

This Natranaerobius thermophilus (strain ATCC BAA-1301 / DSM 18059 / JW/NM-WN-LF) protein is Large ribosomal subunit protein bL17.